The primary structure comprises 268 residues: Protein limb expression 1 homolog (268 aa).

This sequence belongs to the LIX1 family. As to quaternary structure, interacts with ft (via intracellular domain) and ds (via intracellular domain).

Its subcellular location is the apical cell membrane. The protein resides in the cytoplasm. In terms of biological role, component of the Fat (ft) signaling pathway that functions in normal development of various organs such as the wing and leg. In developing imaginal disks, involved in regulating both the protein levels and apical localization of ft and ds. Involved in establishing planar cell polarity (PCP) along the anterior-posterior axis of the wing (the early Fz signaling event), probably by acting upstream of ds and ft to regulate Fz activity. The polypeptide is Protein limb expression 1 homolog (Drosophila melanogaster (Fruit fly)).